The following is a 128-amino-acid chain: MTTKRKAYVREMKANWWTKLDFYRMYMIREATCIATIWFCLVLLYGVISLGGRHIENFISFSQNPLVVILNIISLAGLLYHAATLYVMTPQVLTIVVKNERLNPNILKNALWAITGLVSLLALVLVYI.

Helical transmembrane passes span 31 to 51 (ATCI…ISLG), 67 to 87 (VVIL…TLYV), and 106 to 126 (ILKN…LVLV).

The protein belongs to the FrdC family. Part of an enzyme complex containing four subunits: a flavoprotein (FrdA), an iron-sulfur protein (FrdB), and two hydrophobic anchor proteins (FrdC and FrdD).

The protein resides in the cell inner membrane. In terms of biological role, anchors the catalytic components of the fumarate reductase complex to the cell membrane, binds quinones. The chain is Fumarate reductase subunit C from Haemophilus ducreyi (strain 35000HP / ATCC 700724).